Here is a 256-residue protein sequence, read N- to C-terminus: Thiazole synthase (256 aa).

The Schiff-base intermediate with DXP role is filled by Lys96. 1-deoxy-D-xylulose 5-phosphate contacts are provided by residues Gly157, 183 to 184, and 205 to 206; these read AG and NT.

Belongs to the ThiG family. As to quaternary structure, homotetramer. Forms heterodimers with either ThiH or ThiS.

It localises to the cytoplasm. It catalyses the reaction [ThiS sulfur-carrier protein]-C-terminal-Gly-aminoethanethioate + 2-iminoacetate + 1-deoxy-D-xylulose 5-phosphate = [ThiS sulfur-carrier protein]-C-terminal Gly-Gly + 2-[(2R,5Z)-2-carboxy-4-methylthiazol-5(2H)-ylidene]ethyl phosphate + 2 H2O + H(+). It participates in cofactor biosynthesis; thiamine diphosphate biosynthesis. Functionally, catalyzes the rearrangement of 1-deoxy-D-xylulose 5-phosphate (DXP) to produce the thiazole phosphate moiety of thiamine. Sulfur is provided by the thiocarboxylate moiety of the carrier protein ThiS. In vitro, sulfur can be provided by H(2)S. The chain is Thiazole synthase from Bacillus cytotoxicus (strain DSM 22905 / CIP 110041 / 391-98 / NVH 391-98).